A 331-amino-acid chain; its full sequence is NADH-cytochrome b5 reductase 2 (331 aa).

Residues 36 to 56 (VGILIASAVGMAGFGTYFMFG) form a helical membrane-spanning segment. Residues 80 to 185 (KGFVSLQLDD…KGPLPKYEWS (106 aa)) form the FAD-binding FR-type domain. 188 to 223 (KHPHVAMIAGGTGITPMYQIMRAIFKNPADKTKVTL) contributes to the FAD binding site.

Belongs to the flavoprotein pyridine nucleotide cytochrome reductase family. The cofactor is FAD.

It is found in the mitochondrion outer membrane. The enzyme catalyses 2 Fe(III)-[cytochrome b5] + NADH = 2 Fe(II)-[cytochrome b5] + NAD(+) + H(+). Its function is as follows. May mediate the reduction of outer membrane cytochrome b5. The protein is NADH-cytochrome b5 reductase 2 (MCR1) of Pyricularia oryzae (strain 70-15 / ATCC MYA-4617 / FGSC 8958) (Rice blast fungus).